The chain runs to 208 residues: Ras-related protein Rab-6A (208 aa).

Residue S2 is modified to N-acetylserine. GTP-binding residues include S23, V24, G25, K26, T27, S28, D39, N40, Y42, and T45. T27 contributes to the Mg(2+) binding site. Positions 32-50 match the Switch 1 motif; the sequence is RFMYDSFDNTYQATIGIDF. Mg(2+) contacts are provided by T45 and D68. Positions 69–88 match the Switch 2 motif; the sequence is TAGQERFRSLIPSYIRDSTV. Positions 71, 126, 127, 129, 156, 157, and 158 each coordinate GTP. S184 is modified (phosphoserine). Residues C206 and C208 are each lipidated (S-geranylgeranyl cysteine). Residue C208 is modified to Cysteine methyl ester.

It belongs to the small GTPase superfamily. Rab family. In terms of assembly, interacts with BICDL1; leads to its accumulation in the pericentrosomal region. Interacts with SCYL1BP1. Interacts with VSP52. Interacts with RABGAP1. Interacts with GCC2 (via its GRIP domain). Interacts with RAB6IP1 (via its RUN 1 domain). Interacts with TMF1. Interacts with CIMAP3. Interacts (GTP-bound) with APBA1/MINT1 isoform 3, also called Mint1_826, but not with isoform 1. Interacts with RIC1; the interaction is direct with a preference for RAB6A-GDP. Interacts with RGP1; the interaction is direct with a preference for RAB6A-GDP. As to quaternary structure, interacts (GTP-bound) with DYNLRB1; the interaction is direct. Interacts with BICD1. Interacts with BICD2; the interaction is direct. Interacts (GTP-bound) with VPS13B. Interacts with BICD1. Interacts (GDP-bound) with DYNLRB1; the interaction is direct. Interacts (GTP-bound) with VPS13B. The cofactor is Mg(2+). In terms of processing, prenylated.

Its subcellular location is the golgi apparatus membrane. The protein resides in the cytoplasmic vesicle. It localises to the secretory vesicle. It is found in the acrosome membrane. It carries out the reaction GTP + H2O = GDP + phosphate + H(+). Regulated by guanine nucleotide exchange factors (GEFs) which promote the exchange of bound GDP for free GTP. Regulated by GTPase activating proteins (GAPs) which increase the GTP hydrolysis activity. Inhibited by GDP dissociation inhibitors (GDIs). Its function is as follows. The small GTPases Rab are key regulators of intracellular membrane trafficking, from the formation of transport vesicles to their fusion with membranes. Rabs cycle between an inactive GDP-bound form and an active GTP-bound form that is able to recruit to membranes different sets of downstream effectors directly responsible for vesicle formation, movement, tethering and fusion. RAB6A acts as a regulator of COPI-independent retrograde transport from the Golgi apparatus towards the endoplasmic reticulum (ER). Has a low GTPase activity. Recruits VPS13B to the Golgi membrane. Plays a role in neuron projection development. The protein is Ras-related protein Rab-6A of Mus musculus (Mouse).